A 393-amino-acid polypeptide reads, in one-letter code: Geranylgeranyl pyrophosphate synthase 2 (393 aa).

The isopentenyl diphosphate site is built by K109, R112, and H141. Mg(2+) contacts are provided by D148 and D152. Residue R157 coordinates dimethylallyl diphosphate. Residue R158 participates in isopentenyl diphosphate binding. The dimethylallyl diphosphate site is built by K235, T236, and Q275. D278 is a Mg(2+) binding site. Residues N282, K292, and K302 each coordinate dimethylallyl diphosphate.

The protein belongs to the FPP/GGPP synthase family. Mg(2+) is required as a cofactor.

The catalysed reaction is isopentenyl diphosphate + dimethylallyl diphosphate = (2E)-geranyl diphosphate + diphosphate. It catalyses the reaction isopentenyl diphosphate + (2E)-geranyl diphosphate = (2E,6E)-farnesyl diphosphate + diphosphate. The enzyme catalyses isopentenyl diphosphate + (2E,6E)-farnesyl diphosphate = (2E,6E,10E)-geranylgeranyl diphosphate + diphosphate. It participates in plant hormone biosynthesis; gibberellin biosynthesis. Geranylgeranyl pyrophosphate synthase; part of the gene cluster that mediates the biosynthesis of gibberellins (GAs), diterpenoids that may provide a selective advantage during infection of the preferred host plant, rice. Gibberellins (GAs) are diterpenoids and are synthesized via the mevalonate pathway. Biosynthesis of the major metabolite GA3 (gibberellic acid) from geranylgeranyl diphosphate (GGPP) requires 13 steps. The GGPP produced by the geranylgeranyl diphosphate synthase GGS2 is converted to ent-kaurene via ent-copalyldiphosphate in a two-step cyclization reaction performed by the bifunctional ent-copalyl diphosphate synthase/ent-kaurene synthase enzyme (CPS/KS). Ent-Kaurene is metabolized to GAs by a series of oxidation reactions catalyzed by cytochrome P450 monooxygenases. Cytochrome P450 monooxygenase P450-4 is an ent-kaurene oxidase that catalyzes the three oxidation steps between ent-kaurene and ent-kaurenoic acid. The highly multifunctional cytochrome P450 monooxygenase P450-1 then catalyzes four steps involving oxidation at two carbon atoms, in the main pathway from ent-kaurenoic acid to GA14 via GA12-aldehyde as well as producing kaurenolides and fujenoic acids as by-products. The cytochrome P450 monooxygenase P450-2 then converts GA14 to GA4 by removal of C-20. GA4 is further converted to GA7 by the GA4 desaturase DES via 1,2-desaturation before cytochrome P450 monooxygenase P450-3, a 13-hydroxylase, hydroxylates GA7 to GA3, the final product of the GA-biosynthetic pathway. The sequence is that of Geranylgeranyl pyrophosphate synthase 2 from Gibberella fujikuroi (strain CBS 195.34 / IMI 58289 / NRRL A-6831) (Bakanae and foot rot disease fungus).